Reading from the N-terminus, the 412-residue chain is Subtilisin-like protease 6 (412 aa).

Positions 1–20 (MGFITKAIPIVLAALSTVNG) are cleaved as a signal peptide. The propeptide occupies 21–127 (ARILEAGPHA…VRATTNGTNL (107 aa)). The region spanning 36–120 (KYIVVMKKDV…FIEPDFVVRA (85 aa)) is the Inhibitor I9 domain. Positions 135–412 (SWGLARVSTR…SKLIYNGSGK (278 aa)) constitute a Peptidase S8 domain. Residues Asp-167 and His-198 each act as charge relay system in the active site. N-linked (GlcNAc...) asparagine glycans are attached at residues Asn-252, Asn-264, and Asn-325. Catalysis depends on Ser-358, which acts as the Charge relay system. Asn-408 is a glycosylation site (N-linked (GlcNAc...) asparagine).

The protein belongs to the peptidase S8 family.

It is found in the secreted. In terms of biological role, secreted subtilisin-like serine protease with keratinolytic activity that contributes to pathogenicity. The chain is Subtilisin-like protease 6 (SUB6) from Trichophyton verrucosum (strain HKI 0517).